We begin with the raw amino-acid sequence, 257 residues long: Leucine-rich repeat-containing protein 3 (257 aa).

Residues 1-32 (MGTVRPPRPSLLLVSTRESCLFLLFCLHLGAA) form the signal peptide. The 32-residue stretch at 33–64 (CPQPCRCPDHAGAVAVFCSLRGLQEVPEDIPA) folds into the LRRNT domain. 4 LRR repeats span residues 65-86 (NTVL…AFQH), 89-110 (RLRE…TFAG), 114-135 (GLRL…ALGK), and 136-157 (LSAK…QEAL). A helical membrane pass occupies residues 205-225 (VAMLVTMFGWFAMVIAYVVYY).

Belongs to the LRRC3 family. In terms of tissue distribution, widely expressed; detected in testis, lung, small intestine, breast, brain, heart, bone marrow, placenta, colon, fetal brain, liver, fetal liver, thymus, salivary gland, spinal cord, spleen, trachea and adrenal gland.

It localises to the membrane. In Homo sapiens (Human), this protein is Leucine-rich repeat-containing protein 3 (LRRC3).